Reading from the N-terminus, the 899-residue chain is Solute carrier family 12 member 9 (899 aa).

The Cytoplasmic portion of the chain corresponds to 1–42; that stretch reads MANEHSPLLVHGVYSMMGNAEDSRGGSAGTGEASNPKTDPRK. A helical transmembrane segment spans residues 43–63; it reads LNTFFGVMVPTILSMFSIVLF. Residues 64-78 are Extracellular-facing; the sequence is LRTGFVVGHAGLLHG. A helical membrane pass occupies residues 79–99; that stretch reads LLMLFVAYFIISLTILSICAI. Residues 100 to 125 lie on the Cytoplasmic side of the membrane; sequence STNGAVEGGGAYFMISRSLGPEFGGS. A helical transmembrane segment spans residues 126–146; the sequence is IGLMFYLAKVCACGVYVLGLV. At 147–175 the chain is on the extracellular side; it reads EAIMDVFGQDPGSSVAQGLRVLPQGYWYT. The helical transmembrane segment at 176 to 196 threads the bilayer; that stretch reads VLYSSVVLLLCMLVCLVGAHI. Topologically, residues 197–201 are cytoplasmic; it reads YAKAS. Residues 202 to 222 traverse the membrane as a helical segment; it reads FLILLVVTVSLISIIISPLIV. Residues 223 to 269 are Extracellular-facing; sequence SPQGFNITHTYGNNHSVTVSPSYTGFNSTTLKNNLGPRYSLDYSTNT. Asparagine 228, asparagine 236, and asparagine 249 each carry an N-linked (GlcNAc...) asparagine glycan. The helical transmembrane segment at 270-290 threads the bilayer; that stretch reads MMSFATVFAVMFTSCTGIMAG. The Cytoplasmic segment spans residues 291–306; sequence ANMSGELKNPSESIPK. Residues 307–327 form a helical membrane-spanning segment; the sequence is GTIMAVAYTFTVYVLLYLLLS. At 328-350 the chain is on the extracellular side; it reads STCDRSLLLNDYAVFQRVNVWPP. A helical transmembrane segment spans residues 351–371; it reads FVTIGVYCASLSAAMCSMIGA. The Cytoplasmic portion of the chain corresponds to 372–373; the sequence is SR. The chain crosses the membrane as a helical span at residues 374–394; sequence ILHALALDQLFGLPLAPAAVT. At 395–399 the chain is on the extracellular side; the sequence is SSSGN. A helical membrane pass occupies residues 400–420; the sequence is PWVSVLYTWALVQCTLFAGQL. Asparagine 421 is a topological domain (cytoplasmic). The chain crosses the membrane as a helical span at residues 422 to 442; it reads VIAGIVTVFYLLAYAAVDLAC. The Extracellular segment spans residues 443–455; sequence LALEWASAPNFRP. The chain crosses the membrane as a helical span at residues 456-476; it reads TFQFFSWHTCLLGIISCVVMM. Residues 477-487 are Extracellular-facing; that stretch reads FVINPVYSSAS. Residues 488–510 traverse the membrane as a helical segment; that stretch reads IVLLLLLLLFLHYRSPTSSWGYI. Residues 511-563 lie on the Cytoplasmic side of the membrane; it reads SQALIFHQVRKYLLMLDSRKDHVKFWRPQVLLMVSNPRSSCQLICFVNQLKKG. Residues 564-584 form a helical membrane-spanning segment; that stretch reads GLFVLGHVQIGDLDVLPADPV. The Extracellular segment spans residues 585 to 749; sequence QPQYNFWLSL…NLLTPGSASY (165 aa). Residues 750–770 traverse the membrane as a helical segment; sequence ADVGSLFLLQMACVLNMASGW. The Cytoplasmic portion of the chain corresponds to 771–899; sequence RRARLRIFVC…GVTPVTCTEL (129 aa).

It belongs to the SLC12A transporter family.

It is found in the cell membrane. It localises to the lysosome membrane. Its function is as follows. Seems to correspond to a subunit of a multimeric transport system and thus, additional subunits may be required for its function. May play a role in lysosomal ion flux and osmoregulation. The protein is Solute carrier family 12 member 9 (slc12a9) of Danio rerio (Zebrafish).